The primary structure comprises 365 residues: Isopentenyl-diphosphate delta-isomerase (365 aa).

Arg4 to Lys5 is a substrate binding site. FMN is bound by residues Gly62 to Thr64, Ser92, and Asn121. Substrate is bound at residue Ser92–Arg94. Gln155 is a binding site for substrate. Residue Glu156 coordinates Mg(2+). Residues Lys187, Thr216, Gly267–Arg269, and Ala288–Leu289 each bind FMN.

Belongs to the IPP isomerase type 2 family. As to quaternary structure, homooctamer. Dimer of tetramers. The cofactor is FMN. Requires NADPH as cofactor. It depends on Mg(2+) as a cofactor.

It is found in the cytoplasm. The enzyme catalyses isopentenyl diphosphate = dimethylallyl diphosphate. In terms of biological role, involved in the biosynthesis of isoprenoids. Catalyzes the 1,3-allylic rearrangement of the homoallylic substrate isopentenyl (IPP) to its allylic isomer, dimethylallyl diphosphate (DMAPP). The sequence is that of Isopentenyl-diphosphate delta-isomerase from Methanopyrus kandleri (strain AV19 / DSM 6324 / JCM 9639 / NBRC 100938).